Reading from the N-terminus, the 64-residue chain is Conotoxin VnMRCL-04 (64 aa).

The signal sequence occupies residues methionine 1–alanine 22. The propeptide occupies arginine 23–arginine 48. A Tryptophan amide modification is found at tryptophan 63.

It belongs to the conotoxin T superfamily. In terms of processing, contains 2 disulfide bonds that can be either 'C1-C3, C2-C4' or 'C1-C4, C2-C3', since these disulfide connectivities have been observed for conotoxins with cysteine framework V (for examples, see AC P0DQQ7 and AC P81755). As to expression, expressed by the venom duct.

The protein localises to the secreted. This is Conotoxin VnMRCL-04 from Conus ventricosus (Mediterranean cone).